The primary structure comprises 137 residues: Small ribosomal subunit protein uS12 (137 aa).

The disordered stretch occupies residues 1–55; the sequence is MPTINQLVRKPRKSKVEKSDSPALNKGYNSFKKTQTNVNSPQKRGVCTRVGTMTP. A compositionally biased stretch (polar residues) spans 27–42; that stretch reads GYNSFKKTQTNVNSPQ. The residue at position 102 (Asp102) is a 3-methylthioaspartic acid.

The protein belongs to the universal ribosomal protein uS12 family. Part of the 30S ribosomal subunit. Contacts proteins S8 and S17. May interact with IF1 in the 30S initiation complex.

Its function is as follows. With S4 and S5 plays an important role in translational accuracy. Functionally, interacts with and stabilizes bases of the 16S rRNA that are involved in tRNA selection in the A site and with the mRNA backbone. Located at the interface of the 30S and 50S subunits, it traverses the body of the 30S subunit contacting proteins on the other side and probably holding the rRNA structure together. The combined cluster of proteins S8, S12 and S17 appears to hold together the shoulder and platform of the 30S subunit. The polypeptide is Small ribosomal subunit protein uS12 (Enterococcus faecalis (strain ATCC 700802 / V583)).